Consider the following 240-residue polypeptide: Homeobox protein notochord (240 aa).

A compositionally biased stretch (polar residues) spans 1 to 13 (MSSPAPSGTQVQP). Disordered regions lie at residues 1-21 (MSSP…PCPG) and 208-240 (QKLK…GIGS). Residues 149 to 208 (TKRVRTTFNLQQLQELEKVFAKQHNLVGKERAQLAARLHLTENQVRIWFQNRRVKYQKQQ) constitute a DNA-binding region (homeobox). Residues 213–225 (PSSSVMEEPSSSS) are compositionally biased toward low complexity.

The protein resides in the nucleus. Its function is as follows. Transcription factor that controls node morphogenesis. Acts downstream of both FOXA2 and Brachyury (T) during notochord development. Is essential for cilia formation in the posterior notochord (PNC) and for left-right patterning; acts upstream of FOXJ1 and RFX3 in this process and is required for the expression of various components important for axonemal assembly and function. Plays a role in regulating axial versus paraxial cell fate. Activates the transcription of ciliary proteins C11orf97 homolog, FAM183B and SPACA9 in the embryonic ventral node. The protein is Homeobox protein notochord (Noto) of Mus musculus (Mouse).